A 230-amino-acid polypeptide reads, in one-letter code: Phosphoribosylaminoimidazole-succinocarboxamide synthase (230 aa).

It belongs to the SAICAR synthetase family.

The catalysed reaction is 5-amino-1-(5-phospho-D-ribosyl)imidazole-4-carboxylate + L-aspartate + ATP = (2S)-2-[5-amino-1-(5-phospho-beta-D-ribosyl)imidazole-4-carboxamido]succinate + ADP + phosphate + 2 H(+). It participates in purine metabolism; IMP biosynthesis via de novo pathway; 5-amino-1-(5-phospho-D-ribosyl)imidazole-4-carboxamide from 5-amino-1-(5-phospho-D-ribosyl)imidazole-4-carboxylate: step 1/2. This chain is Phosphoribosylaminoimidazole-succinocarboxamide synthase, found in Thermotoga sp. (strain RQ2).